A 430-amino-acid chain; its full sequence is Long-chain specific acyl-CoA dehydrogenase, mitochondrial (430 aa).

The N-terminal 30 residues, Met1–Ser30, are a transit peptide targeting the mitochondrion. The residue at position 42 (Lys42) is an N6-acetyllysine. 2 positions are modified to phosphoserine: Ser54 and Ser55. An N6-acetyllysine; alternate mark is found at Lys66 and Lys81. N6-succinyllysine; alternate occurs at positions 66 and 81. An N6-acetyllysine mark is found at Lys92 and Lys95. At Lys165 the chain carries N6-succinyllysine. FAD is bound at residue Ile170–Ser179. Substrate is bound at residue Ser179. Ser191 is modified (phosphoserine). Phe203–Thr205 provides a ligand contact to FAD. Ala227–His228 contacts substrate. Lys240 carries the N6-succinyllysine modification. N6-acetyllysine; alternate is present on residues Lys254 and Lys279. Residues Lys254 and Lys279 each carry the N6-succinyllysine; alternate modification. Residues Tyr282 and Pro289–Arg292 contribute to the substrate site. Glu291 functions as the Proton acceptor in the catalytic mechanism. Arg317 serves as a coordination point for FAD. At Lys318 the chain carries N6-acetyllysine. Lys322 carries the N6-acetyllysine; alternate modification. Lys322 bears the N6-succinyllysine; alternate mark. Gln328 lines the FAD pocket. Lys358 carries the N6-acetyllysine modification. Ser362 is subject to Phosphoserine. FAD is bound at residue Gln385–Gly389. Gly412–Gly413 lines the substrate pocket. Position 414-416 (Thr414–Glu416) interacts with FAD.

This sequence belongs to the acyl-CoA dehydrogenase family. As to quaternary structure, homotetramer. It depends on FAD as a cofactor. Post-translationally, acetylation at Lys-318 and Lys-322 in proximity of the cofactor-binding sites strongly reduces catalytic activity. These sites are deacetylated by SIRT3.

The protein localises to the mitochondrion matrix. The catalysed reaction is a long-chain 2,3-saturated fatty acyl-CoA + oxidized [electron-transfer flavoprotein] + H(+) = a long-chain (2E)-enoyl-CoA + reduced [electron-transfer flavoprotein]. It carries out the reaction octanoyl-CoA + oxidized [electron-transfer flavoprotein] + H(+) = (2E)-octenoyl-CoA + reduced [electron-transfer flavoprotein]. The enzyme catalyses decanoyl-CoA + oxidized [electron-transfer flavoprotein] + H(+) = (2E)-decenoyl-CoA + reduced [electron-transfer flavoprotein]. It catalyses the reaction dodecanoyl-CoA + oxidized [electron-transfer flavoprotein] + H(+) = (2E)-dodecenoyl-CoA + reduced [electron-transfer flavoprotein]. The catalysed reaction is tetradecanoyl-CoA + oxidized [electron-transfer flavoprotein] + H(+) = (2E)-tetradecenoyl-CoA + reduced [electron-transfer flavoprotein]. It carries out the reaction oxidized [electron-transfer flavoprotein] + hexadecanoyl-CoA + H(+) = (2E)-hexadecenoyl-CoA + reduced [electron-transfer flavoprotein]. The enzyme catalyses octadecanoyl-CoA + oxidized [electron-transfer flavoprotein] + H(+) = (2E)-octadecenoyl-CoA + reduced [electron-transfer flavoprotein]. It catalyses the reaction (5E)-tetradecenoyl-CoA + oxidized [electron-transfer flavoprotein] + H(+) = (2E,5E)-tetradecadienoyl-CoA + reduced [electron-transfer flavoprotein]. The catalysed reaction is (5Z)-tetradecenoyl-CoA + oxidized [electron-transfer flavoprotein] + H(+) = (2E,5Z)-tetradecadienoyl-CoA + reduced [electron-transfer flavoprotein]. It carries out the reaction oxidized [electron-transfer flavoprotein] + (9Z)-octadecenoyl-CoA + H(+) = (2E,9Z)-octadecadienoyl-CoA + reduced [electron-transfer flavoprotein]. The enzyme catalyses hexanoyl-CoA + oxidized [electron-transfer flavoprotein] + H(+) = (2E)-hexenoyl-CoA + reduced [electron-transfer flavoprotein]. It catalyses the reaction eicosanoyl-CoA + oxidized [electron-transfer flavoprotein] + H(+) = (2E)-eicosenoyl-CoA + reduced [electron-transfer flavoprotein]. The catalysed reaction is docosanoyl-CoA + oxidized [electron-transfer flavoprotein] + H(+) = (2E)-docosenoyl-CoA + reduced [electron-transfer flavoprotein]. It carries out the reaction tetracosanoyl-CoA + oxidized [electron-transfer flavoprotein] + H(+) = (2E)-tetracosenoyl-CoA + reduced [electron-transfer flavoprotein]. Its pathway is lipid metabolism; mitochondrial fatty acid beta-oxidation. Inhibited by crotonyl-CoA, 2-octenoyl-CoA and 2-hexadecenoyl-CoA. Its function is as follows. Long-chain specific acyl-CoA dehydrogenase is one of the acyl-CoA dehydrogenases that catalyze the first step of mitochondrial fatty acid beta-oxidation, an aerobic process breaking down fatty acids into acetyl-CoA and allowing the production of energy from fats. The first step of fatty acid beta-oxidation consists in the removal of one hydrogen from C-2 and C-3 of the straight-chain fatty acyl-CoA thioester, resulting in the formation of trans-2-enoyl-CoA. Among the different mitochondrial acyl-CoA dehydrogenases, long-chain specific acyl-CoA dehydrogenase can act on saturated and unsaturated acyl-CoAs with 6 to 24 carbons with a preference for 8 to 18 carbons long primary chains. The chain is Long-chain specific acyl-CoA dehydrogenase, mitochondrial from Rattus norvegicus (Rat).